The chain runs to 1174 residues: RecBCD enzyme subunit RecB (1174 aa).

The DNA-binding and helicase activity, interacts with RecC stretch occupies residues 1 to 852 (MKIDSLKEKL…GGKTMNYEGL (852 aa)). Positions 4–449 (DSLKEKLNIF…YYLDTNWRSS (446 aa)) constitute a UvrD-like helicase ATP-binding domain. 25-32 (ASAGTGKT) serves as a coordination point for ATP. The UvrD-like helicase C-terminal domain occupies 479 to 745 (PSSKNLKMNF…KIITIHKSKG (267 aa)). The tract at residues 900-1174 (TWSITSFSQL…LIKKTMTLIS (275 aa)) is nuclease activity, interacts with RecD and RecA. The Mg(2+) site is built by histidine 957, aspartate 1068, and aspartate 1081. Catalysis depends on aspartate 1081, which acts as the For nuclease activity.

Belongs to the helicase family. UvrD subfamily. Heterotrimer of RecB, RecC and RecD. All subunits contribute to DNA-binding. Interacts with RecA. It depends on Mg(2+) as a cofactor.

It carries out the reaction Exonucleolytic cleavage (in the presence of ATP) in either 5'- to 3'- or 3'- to 5'-direction to yield 5'-phosphooligonucleotides.. The catalysed reaction is Couples ATP hydrolysis with the unwinding of duplex DNA by translocating in the 3'-5' direction.. The enzyme catalyses ATP + H2O = ADP + phosphate + H(+). A helicase/nuclease that prepares dsDNA breaks (DSB) for recombinational DNA repair. Binds to DSBs and unwinds DNA via a highly rapid and processive ATP-dependent bidirectional helicase activity. Unwinds dsDNA until it encounters a Chi (crossover hotspot instigator) sequence from the 3' direction. Cuts ssDNA a few nucleotides 3' to the Chi site. The properties and activities of the enzyme are changed at Chi. The Chi-altered holoenzyme produces a long 3'-ssDNA overhang and facilitates RecA-binding to the ssDNA for homologous DNA recombination and repair. Holoenzyme degrades any linearized DNA that is unable to undergo homologous recombination. In the holoenzyme this subunit contributes ATPase, 3'-5' helicase, exonuclease activity and loads RecA onto ssDNA. This is RecBCD enzyme subunit RecB from Buchnera aphidicola subsp. Acyrthosiphon pisum (strain APS) (Acyrthosiphon pisum symbiotic bacterium).